Here is a 314-residue protein sequence, read N- to C-terminus: MRKKCIVIVGPTGVGKTRLSIFLAKRLSSEIISADSMQIYKYMDIGTAKVEPKYQRVIKHHLIDIVEPYENFNVEQFKNLCIEKIEEISSKNKIPIIVGGTGLYINSITHKLEFNAVKSDDKLREELENISLQYGNEKLHEILEDIDPKSADKIHMNNVRRVIRAIEVCKLTGHKFSEINDKFDHYNDDYDFYIIGLNDDRQVLYERINKRVDEMIDEGFMAECKYIYEMTDENSQSIQAIGYREAFMYLNNKISFKDMISLMKKNSRKYAKRQLTWFRQDKRIHWMNLKDFREFEDIEQICLKNVKEWLYDKR.

An ATP-binding site is contributed by 10–17; that stretch reads GPTGVGKT. A substrate-binding site is contributed by 12–17; the sequence is TGVGKT. The segment at 35 to 38 is interaction with substrate tRNA; sequence DSMQ.

Belongs to the IPP transferase family. In terms of assembly, monomer. It depends on Mg(2+) as a cofactor.

It catalyses the reaction adenosine(37) in tRNA + dimethylallyl diphosphate = N(6)-dimethylallyladenosine(37) in tRNA + diphosphate. In terms of biological role, catalyzes the transfer of a dimethylallyl group onto the adenine at position 37 in tRNAs that read codons beginning with uridine, leading to the formation of N6-(dimethylallyl)adenosine (i(6)A). The polypeptide is tRNA dimethylallyltransferase (Finegoldia magna (strain ATCC 29328 / DSM 20472 / WAL 2508) (Peptostreptococcus magnus)).